The primary structure comprises 332 residues: Glycerol-3-phosphate dehydrogenase [NAD(P)+] (332 aa).

W11, R30, and K108 together coordinate NADPH. Residues K108, G137, and S139 each coordinate sn-glycerol 3-phosphate. NADPH is bound at residue A141. Residues K192, D245, S255, R256, and N257 each coordinate sn-glycerol 3-phosphate. The active-site Proton acceptor is K192. R256 lines the NADPH pocket. Residues V280 and E282 each coordinate NADPH.

The protein belongs to the NAD-dependent glycerol-3-phosphate dehydrogenase family.

It is found in the cytoplasm. The enzyme catalyses sn-glycerol 3-phosphate + NAD(+) = dihydroxyacetone phosphate + NADH + H(+). It catalyses the reaction sn-glycerol 3-phosphate + NADP(+) = dihydroxyacetone phosphate + NADPH + H(+). It participates in membrane lipid metabolism; glycerophospholipid metabolism. Its function is as follows. Catalyzes the reduction of the glycolytic intermediate dihydroxyacetone phosphate (DHAP) to sn-glycerol 3-phosphate (G3P), the key precursor for phospholipid synthesis. The chain is Glycerol-3-phosphate dehydrogenase [NAD(P)+] from Burkholderia pseudomallei (strain 1710b).